A 297-amino-acid polypeptide reads, in one-letter code: HTH-type transcriptional regulator ArgP (297 aa).

One can recognise an HTH lysR-type domain in the interval 4–60 (PDYRTLQALDAVIRERGFERAAQKLCITQSAVSQRIKQLENMFGQPLLVRTVPPRPT). The segment at residues 21–40 (FERAAQKLCITQSAVSQRIK) is a DNA-binding region (H-T-H motif).

This sequence belongs to the LysR transcriptional regulatory family. In terms of assembly, homodimer.

In terms of biological role, controls the transcription of genes involved in arginine and lysine metabolism. This is HTH-type transcriptional regulator ArgP from Escherichia fergusonii (strain ATCC 35469 / DSM 13698 / CCUG 18766 / IAM 14443 / JCM 21226 / LMG 7866 / NBRC 102419 / NCTC 12128 / CDC 0568-73).